The chain runs to 392 residues: Chorismate synthase (392 aa).

2 residues coordinate NADP(+): Arg-40 and Arg-46. FMN is bound by residues 129–131, 257–258, Gly-302, 317–321, and Arg-343; these read RSS, QA, and KPIAT.

This sequence belongs to the chorismate synthase family. In terms of assembly, homotetramer. Requires FMNH2 as cofactor.

It catalyses the reaction 5-O-(1-carboxyvinyl)-3-phosphoshikimate = chorismate + phosphate. Its pathway is metabolic intermediate biosynthesis; chorismate biosynthesis; chorismate from D-erythrose 4-phosphate and phosphoenolpyruvate: step 7/7. Catalyzes the anti-1,4-elimination of the C-3 phosphate and the C-6 proR hydrogen from 5-enolpyruvylshikimate-3-phosphate (EPSP) to yield chorismate, which is the branch point compound that serves as the starting substrate for the three terminal pathways of aromatic amino acid biosynthesis. This reaction introduces a second double bond into the aromatic ring system. The protein is Chorismate synthase of Chloroherpeton thalassium (strain ATCC 35110 / GB-78).